Consider the following 223-residue polypeptide: Methanol utilization control regulatory protein MoxX (223 aa).

The 118-residue stretch at 16–133 (QILIVDDHPV…EICAAFTEVA (118 aa)) folds into the Response regulatory domain. The 66-residue stretch at 155–220 (PGTSAPRLTG…DLVVKGIRYF (66 aa)) folds into the HTH luxR-type domain. Positions 179-198 (YRDIADRACISYKTVSNVSL) form a DNA-binding region, H-T-H motif.

Post-translationally, phosphorylated by MoxY.

Its subcellular location is the cytoplasm. Its function is as follows. Member of the two-component regulatory system MoxY/MoxX probably involved in the regulation of the methanol dehydrogenase expression. The sequence is that of Methanol utilization control regulatory protein MoxX (moxX) from Paracoccus denitrificans.